A 360-amino-acid chain; its full sequence is Photosystem II protein D1 (360 aa).

3 consecutive transmembrane segments (helical) span residues Tyr29 to Ser46, His118 to Leu133, and Trp142 to Ala156. His118 serves as a coordination point for chlorophyll a. Tyr126 is a binding site for pheophytin a. [CaMn4O5] cluster is bound by residues Asp170 and Glu189. A helical membrane pass occupies residues Phe197–Leu218. Residue His198 participates in chlorophyll a binding. Residues His215 and Ser264 to Phe265 each bind a quinone. Position 215 (His215) interacts with Fe cation. His272 is a Fe cation binding site. A helical transmembrane segment spans residues Phe274–Met288. [CaMn4O5] cluster contacts are provided by His332, Glu333, Asp342, and Ala344. Positions Ala345–Ala360 are excised as a propeptide.

It belongs to the reaction center PufL/M/PsbA/D family. In terms of assembly, PSII is composed of 1 copy each of membrane proteins PsbA, PsbB, PsbC, PsbD, PsbE, PsbF, PsbH, PsbI, PsbJ, PsbK, PsbL, PsbM, PsbT, PsbX, PsbY, PsbZ, Psb30/Ycf12, at least 3 peripheral proteins of the oxygen-evolving complex and a large number of cofactors. It forms dimeric complexes. The cofactor is The D1/D2 heterodimer binds P680, chlorophylls that are the primary electron donor of PSII, and subsequent electron acceptors. It shares a non-heme iron and each subunit binds pheophytin, quinone, additional chlorophylls, carotenoids and lipids. D1 provides most of the ligands for the Mn4-Ca-O5 cluster of the oxygen-evolving complex (OEC). There is also a Cl(-1) ion associated with D1 and D2, which is required for oxygen evolution. The PSII complex binds additional chlorophylls, carotenoids and specific lipids.. Post-translationally, tyr-161 forms a radical intermediate that is referred to as redox-active TyrZ, YZ or Y-Z. C-terminally processed by CTPA; processing is essential to allow assembly of the oxygen-evolving complex and thus photosynthetic growth.

It is found in the plastid. The protein resides in the chloroplast thylakoid membrane. It catalyses the reaction 2 a plastoquinone + 4 hnu + 2 H2O = 2 a plastoquinol + O2. Its function is as follows. Photosystem II (PSII) is a light-driven water:plastoquinone oxidoreductase that uses light energy to abstract electrons from H(2)O, generating O(2) and a proton gradient subsequently used for ATP formation. It consists of a core antenna complex that captures photons, and an electron transfer chain that converts photonic excitation into a charge separation. The D1/D2 (PsbA/PsbD) reaction center heterodimer binds P680, the primary electron donor of PSII as well as several subsequent electron acceptors. This chain is Photosystem II protein D1, found in Emiliania huxleyi (Coccolithophore).